Consider the following 768-residue polypeptide: Pentatricopeptide repeat-containing protein At4g01030, mitochondrial (768 aa).

A mitochondrion-targeting transit peptide spans 1–25 (MYRFLGLTIHGGLIKRGLDNSDTRV). 16 PPR repeats span residues 22–52 (DTRV…MPKR), 53–87 (DDLA…GAKA), 88–122 (YDST…GLES), 123–153 (NVSM…MKDR), 154–188 (NLSS…GLKP), 189–223 (DIVT…GLKP), 224–254 (STSS…ILRN), 259–289 (DVYV…MDAK), 290–324 (NIVA…GIKP), 325–359 (DAIT…GVAP), 360–394 (NVVS…GVGP), 395–429 (NAAT…NLIC), 430–460 (DAYV…IKNK), 461–495 (SLAS…GMEP), 496–526 (DAIT…MRSR), and 532–562 (TIEH…MSLK). The tract at residues 567-642 (IWGAFLSSCK…QDLWSWIQID (76 aa)) is type E motif. The interval 643 to 673 (QTVHIFYAEGKTHPDEGDIYFELYKLVSEMK) is type E(+) motif. Positions 674 to 768 (KSGYVPDTSC…DGKCSCNDSW (95 aa)) are type DYW motif.

Belongs to the PPR family. PCMP-H subfamily.

It localises to the mitochondrion. In Arabidopsis thaliana (Mouse-ear cress), this protein is Pentatricopeptide repeat-containing protein At4g01030, mitochondrial (PCMP-H65).